We begin with the raw amino-acid sequence, 437 residues long: Glutamate-1-semialdehyde 2,1-aminomutase 1 (437 aa).

At K268 the chain carries N6-(pyridoxal phosphate)lysine.

Belongs to the class-III pyridoxal-phosphate-dependent aminotransferase family. HemL subfamily. Homodimer. It depends on pyridoxal 5'-phosphate as a cofactor.

Its subcellular location is the cytoplasm. It carries out the reaction (S)-4-amino-5-oxopentanoate = 5-aminolevulinate. It functions in the pathway porphyrin-containing compound metabolism; protoporphyrin-IX biosynthesis; 5-aminolevulinate from L-glutamyl-tRNA(Glu): step 2/2. This is Glutamate-1-semialdehyde 2,1-aminomutase 1 from Halalkalibacterium halodurans (strain ATCC BAA-125 / DSM 18197 / FERM 7344 / JCM 9153 / C-125) (Bacillus halodurans).